The following is a 428-amino-acid chain: Enolase (428 aa).

A (2R)-2-phosphoglycerate-binding site is contributed by Q163. E205 (proton donor) is an active-site residue. The Mg(2+) site is built by D242, E285, and D312. Residues K337, R366, S367, and K388 each coordinate (2R)-2-phosphoglycerate. K337 functions as the Proton acceptor in the catalytic mechanism.

This sequence belongs to the enolase family. The cofactor is Mg(2+).

The protein resides in the cytoplasm. The protein localises to the secreted. Its subcellular location is the cell surface. The enzyme catalyses (2R)-2-phosphoglycerate = phosphoenolpyruvate + H2O. It participates in carbohydrate degradation; glycolysis; pyruvate from D-glyceraldehyde 3-phosphate: step 4/5. In terms of biological role, catalyzes the reversible conversion of 2-phosphoglycerate (2-PG) into phosphoenolpyruvate (PEP). It is essential for the degradation of carbohydrates via glycolysis. The chain is Enolase from Finegoldia magna (strain ATCC 29328 / DSM 20472 / WAL 2508) (Peptostreptococcus magnus).